A 211-amino-acid polypeptide reads, in one-letter code: Transcription factor E (211 aa).

The region spanning 10 to 130 is the HTH TFE/IIEalpha-type domain; the sequence is GNPAIYQYLL…LWLMRMDHMN (121 aa).

This sequence belongs to the TFE family. As to quaternary structure, monomer. Interaction with RNA polymerase subunits RpoF and RpoE is necessary for Tfe stimulatory transcription activity. Able to interact with Tbp and RNA polymerase in the absence of DNA promoter. Interacts both with the preinitiation and elongation complexes.

Its function is as follows. Transcription factor that plays a role in the activation of archaeal genes transcribed by RNA polymerase. Facilitates transcription initiation by enhancing TATA-box recognition by TATA-box-binding protein (Tbp), and transcription factor B (Tfb) and RNA polymerase recruitment. Not absolutely required for transcription in vitro, but particularly important in cases where Tbp or Tfb function is not optimal. It dynamically alters the nucleic acid-binding properties of RNA polymerases by stabilizing the initiation complex and destabilizing elongation complexes. Seems to translocate with the RNA polymerase following initiation and acts by binding to the non template strand of the transcription bubble in elongation complexes. The chain is Transcription factor E from Methanocorpusculum labreanum (strain ATCC 43576 / DSM 4855 / Z).